Reading from the N-terminus, the 925-residue chain is Protein translocase subunit SecA (925 aa).

ATP contacts are provided by residues Gln87, 105-109, and Asp515; that span reads GEGKT. Residues Cys909, Cys911, Cys920, and His921 each coordinate Zn(2+).

It belongs to the SecA family. In terms of assembly, monomer and homodimer. Part of the essential Sec protein translocation apparatus which comprises SecA, SecYEG and auxiliary proteins SecDF-YajC and YidC. Requires Zn(2+) as cofactor.

Its subcellular location is the cell inner membrane. The protein localises to the cytoplasm. It carries out the reaction ATP + H2O + cellular proteinSide 1 = ADP + phosphate + cellular proteinSide 2.. Its function is as follows. Part of the Sec protein translocase complex. Interacts with the SecYEG preprotein conducting channel. Has a central role in coupling the hydrolysis of ATP to the transfer of proteins into and across the cell membrane, serving both as a receptor for the preprotein-SecB complex and as an ATP-driven molecular motor driving the stepwise translocation of polypeptide chains across the membrane. The polypeptide is Protein translocase subunit SecA (Cupriavidus taiwanensis (strain DSM 17343 / BCRC 17206 / CCUG 44338 / CIP 107171 / LMG 19424 / R1) (Ralstonia taiwanensis (strain LMG 19424))).